Here is a 552-residue protein sequence, read N- to C-terminus: Protein FAM234A (552 aa).

A disordered region spans residues 1–40 (MMDDKDLEAEIHPLKNEDKKSQENLGNLPKTEDNLKNKPV). Topologically, residues 1-49 (MMDDKDLEAEIHPLKNEDKKSQENLGNLPKTEDNLKNKPVPSRLSRCRT) are cytoplasmic. A compositionally biased stretch (basic and acidic residues) spans 8 to 22 (EAEIHPLKNEDKKSQ). Serine 21 bears the Phosphoserine mark. A helical; Signal-anchor for type II membrane protein transmembrane segment spans residues 50 to 70 (VAFFLSLFICLFVVFVLSFII). Residues 71–552 (PCPDRPSSED…FSRLRYRSEV (482 aa)) are Extracellular-facing. 4 N-linked (GlcNAc...) asparagine glycosylation sites follow: asparagine 116, asparagine 119, asparagine 314, and asparagine 473.

The protein belongs to the FAM234 family.

It is found in the membrane. This is Protein FAM234A (Fam234a) from Rattus norvegicus (Rat).